Consider the following 370-residue polypeptide: MEGVDLLGFLIITLNCNVTMVGKLWFVLTMLLRMLVIVLAGRPVYQDEQERFVCNTLQPGCANVCYDVFSPVSHLRFWLIQGVCVLLPSAVFSVYVLHRGATLAALGPRRCPDPREPASGQRRCPRPFGERGGLQVPDFSAGYIIHLLLRTLLEAAFGALHYFLFGFLAPKKFPCTRPPCTGVVDCYVSRPTEKSLLMLFLWAVSALSFLLGLADLVCSLRRRMRRRPGPPTSPSIRKQSGASGHAEGRRTDEEGGREEEGAPAPPGARAGGEGAGSPRRTSRVSGHTKIPDEDESEVTSSASEKLGRQPRGRPHREAAQDPRGSGSEEQPSAAPSRLAAPPSCSSLQPPDPPASSSGAPHLRARKSEWV.

Residues 1–19 lie on the Cytoplasmic side of the membrane; the sequence is MEGVDLLGFLIITLNCNVT. The helical transmembrane segment at 20–40 threads the bilayer; sequence MVGKLWFVLTMLLRMLVIVLA. Residues 41-76 are Extracellular-facing; it reads GRPVYQDEQERFVCNTLQPGCANVCYDVFSPVSHLR. The chain crosses the membrane as a helical span at residues 77-97; it reads FWLIQGVCVLLPSAVFSVYVL. The Cytoplasmic segment spans residues 98–146; sequence HRGATLAALGPRRCPDPREPASGQRRCPRPFGERGGLQVPDFSAGYIIH. Residues 147–167 traverse the membrane as a helical segment; the sequence is LLLRTLLEAAFGALHYFLFGF. The Extracellular segment spans residues 168 to 196; the sequence is LAPKKFPCTRPPCTGVVDCYVSRPTEKSL. Residues 197 to 217 form a helical membrane-spanning segment; the sequence is LMLFLWAVSALSFLLGLADLV. The Cytoplasmic segment spans residues 218 to 370; it reads CSLRRRMRRR…HLRARKSEWV (153 aa). The interval 224-370 is disordered; that stretch reads MRRRPGPPTS…HLRARKSEWV (147 aa). Basic and acidic residues predominate over residues 246–260; the sequence is AEGRRTDEEGGREEE. A compositionally biased stretch (low complexity) spans 331-346; sequence PSAAPSRLAAPPSCSS.

It belongs to the connexin family. Delta-type subfamily. A connexon is composed of a hexamer of connexins. As to expression, expressed in pancreas, kidney, skeletal muscle, liver, placenta, and heart.

It localises to the cell membrane. Its subcellular location is the cell junction. The protein resides in the gap junction. In terms of biological role, one gap junction consists of a cluster of closely packed pairs of transmembrane channels, the connexons, through which materials of low MW diffuse from one cell to a neighboring cell. In Homo sapiens (Human), this protein is Gap junction delta-4 protein (GJD4).